We begin with the raw amino-acid sequence, 502 residues long: ATP synthase subunit alpha (502 aa).

169–176 contacts ATP; it reads GDRQTGKT.

Belongs to the ATPase alpha/beta chains family. As to quaternary structure, F-type ATPases have 2 components, CF(1) - the catalytic core - and CF(0) - the membrane proton channel. CF(1) has five subunits: alpha(3), beta(3), gamma(1), delta(1), epsilon(1). CF(0) has three main subunits: a(1), b(2) and c(9-12). The alpha and beta chains form an alternating ring which encloses part of the gamma chain. CF(1) is attached to CF(0) by a central stalk formed by the gamma and epsilon chains, while a peripheral stalk is formed by the delta and b chains.

It is found in the cell membrane. The enzyme catalyses ATP + H2O + 4 H(+)(in) = ADP + phosphate + 5 H(+)(out). Functionally, produces ATP from ADP in the presence of a proton gradient across the membrane. The alpha chain is a regulatory subunit. The protein is ATP synthase subunit alpha of Streptococcus pyogenes serotype M18 (strain MGAS8232).